A 131-amino-acid chain; its full sequence is Small ribosomal subunit protein uS11 (131 aa).

The protein belongs to the universal ribosomal protein uS11 family. In terms of assembly, part of the 30S ribosomal subunit.

Functionally, located on the platform of the 30S subunit. This is Small ribosomal subunit protein uS11 from Haloquadratum walsbyi (strain DSM 16790 / HBSQ001).